The following is a 405-amino-acid chain: uncharacterized protein (405 aa).

It belongs to the UDP-glycosyltransferase family.

This is an uncharacterized protein from Bacillus subtilis (strain 168).